Here is a 474-residue protein sequence, read N- to C-terminus: MSQLDVLIVDDEESIRNLIAANLKDEGFNPKVAANSTQALKILSEKPVSAVVLDIWLQGSEIDGLGILEIIKKRYPLMPVIIISGHGTIETAVNAIKMGAYDYIEKPFNNDKLVILLTRACEVTKLKRENIDLKSKVIDKTELVGECSVTLKYKMAIAKAATSSCRIMIHGKVGSGKELAARLIHKQSKRVNNPFIIFSPTCMTTEKINQELFGELEKQANNKRPTILEFANNGTLYIDEVSNIPIPIQVKLLKFLKDQTITKPCGKNIKIDIKIITGTSKNIQDEVNNGKFLEDLYYRLNVSSLKVPSLYERKEDIPLLVKYFVKQLSKFSGLKERSFADETIAALQSYEWPGNIRQLRNVVEWTLIMNPLTTGNNEIIKPYMIPSEILANSANLTKLEDSFDMLSMPLREAREVFERQYLSAQMSRFNNNISKTSSFVGMERSALHRKLKLLSLHIPPTNRINDEEYEEANA.

The Response regulatory domain occupies 5–121; sequence DVLIVDDEES…KLVILLTRAC (117 aa). Asp54 carries the 4-aspartylphosphate modification. Residues 143 to 368 form the Sigma-54 factor interaction domain; it reads LVGECSVTLK…LRNVVEWTLI (226 aa). ATP-binding positions include 171–178 and 231–240; these read GKVGSGKE and ANNGTLYIDE.

Functionally, member of the two-component regulatory system RC0849/RC0948. This Rickettsia conorii (strain ATCC VR-613 / Malish 7) protein is Putative response regulator NtrX-like.